Consider the following 75-residue polypeptide: Putative membrane protein insertion efficiency factor (75 aa).

Belongs to the UPF0161 family.

Its subcellular location is the cell inner membrane. Functionally, could be involved in insertion of integral membrane proteins into the membrane. The sequence is that of Putative membrane protein insertion efficiency factor from Gloeothece citriformis (strain PCC 7424) (Cyanothece sp. (strain PCC 7424)).